The chain runs to 104 residues: Phosphate metabolism protein 6 (104 aa).

Residues isoleucine 76–valine 96 traverse the membrane as a helical segment.

It localises to the vacuole membrane. The polypeptide is Phosphate metabolism protein 6 (PHM6) (Saccharomyces cerevisiae (strain ATCC 204508 / S288c) (Baker's yeast)).